A 129-amino-acid polypeptide reads, in one-letter code: Phosphoribosyl-AMP cyclohydrolase (129 aa).

Residue Asp-85 participates in Mg(2+) binding. Zn(2+) is bound at residue Cys-86. Mg(2+) is bound by residues Asp-87 and Asp-89. 2 residues coordinate Zn(2+): Cys-102 and Cys-109.

Belongs to the PRA-CH family. In terms of assembly, homodimer. Requires Mg(2+) as cofactor. The cofactor is Zn(2+).

It localises to the cytoplasm. The enzyme catalyses 1-(5-phospho-beta-D-ribosyl)-5'-AMP + H2O = 1-(5-phospho-beta-D-ribosyl)-5-[(5-phospho-beta-D-ribosylamino)methylideneamino]imidazole-4-carboxamide. The protein operates within amino-acid biosynthesis; L-histidine biosynthesis; L-histidine from 5-phospho-alpha-D-ribose 1-diphosphate: step 3/9. In terms of biological role, catalyzes the hydrolysis of the adenine ring of phosphoribosyl-AMP. This chain is Phosphoribosyl-AMP cyclohydrolase, found in Methanococcus maripaludis (strain C7 / ATCC BAA-1331).